The chain runs to 678 residues: Sulfoquinovosidase (678 aa).

Residues glutamine 288, arginine 301, valine 302, and tryptophan 304 each coordinate a 6-sulfo-alpha-D-quinovosyldiacylglycerol. Residue aspartate 405 is the Nucleophile of the active site. The active site involves glutamate 408. The Proton donor role is filled by aspartate 472. Histidine 537 lines the a 6-sulfo-alpha-D-quinovosyldiacylglycerol pocket.

The protein belongs to the glycosyl hydrolase 31 family.

It catalyses the reaction a 6-sulfo-alpha-D-quinovosyldiacylglycerol + H2O = 6-sulfo-alpha-D-quinovose + a 1,2-diacyl-sn-glycerol. The catalysed reaction is 3-(6-sulfo-alpha-D-quinovosyl)glycerol + H2O = 6-sulfo-alpha-D-quinovose + glycerol. It participates in glycolipid metabolism. With respect to regulation, is inactivated in vitro by the mechanism-based inactivator 5-fluoro-beta-L-idopyranosyl fluoride (5FIdoF) that yields a covalent glycosyl-enzyme complex with the active site nucleophile Asp-405. In terms of biological role, catalyzes the hydrolysis of sulfoquinovosyl diacylglycerides (SQDG) to sulfoquinovose (SQ), which is then degraded by E.coli through the SQ Embden-Meyerhof-Parnas (SQ-EMP) sulfoglycolysis pathway as a source of carbon and sulfur. Therefore, is likely involved in the utilization of the sulfoquinovose headgroup found in ubiquitous plant sulfolipids. Is also able to hydrolyze simple sulfoquinovosides such as sulfoquinovosyl glycerol (SQGro). In vitro, can use the substrate analog para-nitrophenyl alpha-sulfoquinovoside (PNPSQ), but shows no detectable activity toward 4-nitrophenyl alpha-D-glucopyranoside (PNPGlc). Is a retaining glycoside hydrolase, since it forms the alpha anomer of SQ. Also exhibits some alpha-glucosidase activity against alpha-glucosyl fluoride in vitro, although natural substrates, such as alpha-glucobioses are scarcely hydrolyzed. The protein is Sulfoquinovosidase of Escherichia coli (strain K12).